The primary structure comprises 199 residues: Protein GrpE (199 aa).

The segment covering methionine 1 to asparagine 24 has biased composition (basic and acidic residues). Residues methionine 1–glutamate 52 are disordered.

It belongs to the GrpE family. Homodimer.

The protein localises to the cytoplasm. Functionally, participates actively in the response to hyperosmotic and heat shock by preventing the aggregation of stress-denatured proteins, in association with DnaK and GrpE. It is the nucleotide exchange factor for DnaK and may function as a thermosensor. Unfolded proteins bind initially to DnaJ; upon interaction with the DnaJ-bound protein, DnaK hydrolyzes its bound ATP, resulting in the formation of a stable complex. GrpE releases ADP from DnaK; ATP binding to DnaK triggers the release of the substrate protein, thus completing the reaction cycle. Several rounds of ATP-dependent interactions between DnaJ, DnaK and GrpE are required for fully efficient folding. The chain is Protein GrpE from Legionella pneumophila (strain Lens).